The primary structure comprises 122 residues: Movement protein TGB2 (122 aa).

The Cytoplasmic portion of the chain corresponds to 1–12 (MVKSTVPTRPNK). A helical membrane pass occupies residues 13 to 33 (YWPGVVAIGLVSLFIFLSVSN). Residues 34–76 (QKHSTTSGDNIHKFSNGGTYRDGSKCITYNRNSPLAYNGSSSN) are Lumenal-facing. The chain crosses the membrane as a helical span at residues 77–97 (NTLFWLCLLGLSMVWIAYCGY). Residues 98-122 (KSLSGQWHSCQHDKNERNFLFECFE) are Cytoplasmic-facing.

It belongs to the virgaviridae/benyvirus TGB2 movement protein family. As to quaternary structure, interacts with movement protein TGB3. TGB1-TGB3-TGB2 complex formation is enhanced by ATP hydrolysis.

The protein localises to the host cell junction. It is found in the host plasmodesma. The protein resides in the host endoplasmic reticulum membrane. It localises to the host cytoplasm. Its subcellular location is the host cytoskeleton. Participates in the transport of viral genome to neighboring plant cells directly through plasmodesmata, without any budding. TGBp2 and TGBp3 are necessary for intracellular delivery of TGBp1-containing vRNPs to plasmodesmata. Can gate plasmodesmata and increase their size exclusion limit. To a lesser extent than TGB3, induces host actin cytoskeleton network thickening, which probably plays a major role in virus cell-to-cell movement. The protein is Movement protein TGB2 of Peanut clump virus (isolate 87/TGTA2) (PCV).